Consider the following 90-residue polypeptide: Small ribosomal subunit protein bS16 (90 aa).

It belongs to the bacterial ribosomal protein bS16 family.

This is Small ribosomal subunit protein bS16 from Streptococcus agalactiae serotype III (strain NEM316).